The chain runs to 237 residues: UPF0053 protein HI_0056 (237 aa).

Helical transmembrane passes span 12 to 32, 49 to 69, 90 to 110, 126 to 146, 151 to 171, 188 to 208, and 210 to 230; these read ISLV…IIFI, ILGL…LAWI, ILLI…KEAI, YLGV…DSVI, MASH…VMMF, ILAL…SLDI, and IPKG…MINI.

This sequence belongs to the UPF0053 family.

Its subcellular location is the cell membrane. In Haemophilus influenzae (strain ATCC 51907 / DSM 11121 / KW20 / Rd), this protein is UPF0053 protein HI_0056.